We begin with the raw amino-acid sequence, 602 residues long: Sodium- and chloride-dependent GABA transporter 2 (602 aa).

Residues 1-13 (MDSRVSGTTSNGE) are compositionally biased toward polar residues. The tract at residues 1-22 (MDSRVSGTTSNGETKPVYPVME) is disordered. Over 1 to 40 (MDSRVSGTTSNGETKPVYPVMEKKEEDGTLERGHWNNKME) the chain is Cytoplasmic. The next 3 membrane-spanning stretches (helical) occupy residues 41-61 (FVLS…FPYL), 68-88 (GAFF…VFLL), and 121-141 (IVIL…FYLF). Residues 142–206 (SSFTIDLPWG…GIQHLGALRW (65 aa)) lie on the Extracellular side of the membrane. A disulfide bridge connects residues Cys-153 and Cys-162. The N-linked (GlcNAc...) asparagine glycan is linked to Asn-173. The next 2 membrane-spanning stretches (helical) occupy residues 207–227 (ELAL…WKGV) and 233–253 (VVYF…IRGV). N-linked (GlcNAc...) asparagine glycosylation occurs at Asn-269. 7 helical membrane passes run 282–302 (AGTQ…ALGS), 319–339 (FLNS…LGFM), 366–386 (VVML…VVLL), 418–438 (VLIL…LTEG), 453–473 (GMCL…VYGA), 490–510 (PLIK…TFLF), and 528–548 (WWGD…IPAW). Residues 549-602 (SLYRLGTLKGPFRERIRQLMCPAEDLPQRNPAGPSAPATPRTSLLRLTELESHC) lie on the Cytoplasmic side of the membrane. Position 587 is a phosphothreonine (Thr-587). Position 591 is a phosphoserine (Ser-591).

It belongs to the sodium:neurotransmitter symporter (SNF) (TC 2.A.22) family. SLC6A13 subfamily. In terms of tissue distribution, expressed in brain, kidney, lung, liver and testis.

The protein resides in the cell membrane. It is found in the basolateral cell membrane. The catalysed reaction is 4-aminobutanoate(out) + chloride(out) + 2 Na(+)(out) = 4-aminobutanoate(in) + chloride(in) + 2 Na(+)(in). It catalyses the reaction taurine(out) + chloride(out) + 2 Na(+)(out) = taurine(in) + chloride(in) + 2 Na(+)(in). The enzyme catalyses beta-alanine(out) + chloride(out) + 2 Na(+)(out) = beta-alanine(in) + chloride(in) + 2 Na(+)(in). It carries out the reaction hypotaurine(out) + chloride(out) + 2 Na(+)(out) = hypotaurine(in) + chloride(in) + 2 Na(+)(in). Its activity is regulated as follows. GABA transport is inhibited by beta-alanine, 2,3-diaminopropionic acid and SNAP-5114. Mediates sodium- and chloride-dependent transport of gamma-aminobutyric acid (GABA). Mediates transport of beta-alanine. Can also mediate transport of taurine and hypotaurine. The chain is Sodium- and chloride-dependent GABA transporter 2 (SLC6A13) from Homo sapiens (Human).